The following is a 1513-amino-acid chain: DNA topoisomerase 2-binding protein 1-A (1513 aa).

BRCT domains are found at residues 101–189 (VYNM…YSDV) and 194–283 (YLCP…MYKI). The tract at residues 289 to 308 (IKSVPDTSTPTGGNSKPNSR) is disordered. BRCT domains lie at 354–444 (APDD…IYFH), 530–621 (ADTS…SNAL), and 629–726 (EGST…SYLV). The span at 789-799 (QHNKNPQTSGG) shows a compositional bias: polar residues. The segment at 789–809 (QHNKNPQTSGGESKVLQREPS) is disordered. Positions 844-850 (PNQKNRT) match the Nuclear localization signal motif. The BRCT 6 domain maps to 892-984 (DNSKLLINVV…KRVPEALYPH (93 aa)). 2 disordered regions span residues 1031-1053 (ETSDDQVKKAAGDGNPQNPSKDV) and 1086-1109 (SVGRAGFDNSPCTPEGARSTRNGR). Ser1131 carries the phosphoserine modification. BRCT domains follow at residues 1253 to 1344 (SKEE…DYEW) and 1383 to 1480 (IAEG…NYCL). Residues 1508 to 1511 (KRSR) carry the Nuclear localization signal motif.

It belongs to the TOPBP1 family. In terms of assembly, interacts with cdc45. Interacts (via BRCT domains) with ticrr; interaction is cdk2-dependent. Interacts with atr in the presence of atrip. Interacts with recql4 (via N-terminus). Interacts with gmnc. Interacts with cip2a; forming the CIP2A-TOPBP1 complex. In terms of processing, phosphorylation at Ser-1131 is essential for phosphorylation of chek1, and thus for checkpoint regulation.

The protein localises to the nucleus. The protein resides in the chromosome. It localises to the cytoplasm. It is found in the cytoskeleton. Its subcellular location is the microtubule organizing center. The protein localises to the centrosome. The protein resides in the spindle pole. In terms of biological role, scaffold protein that acts as a key protein-protein adapter in DNA replication and DNA repair. Composed of multiple BRCT domains, which specifically recognize and bind phosphorylated proteins, bringing proteins together into functional combinations. Required for DNA replication initiation but not for the formation of pre-replicative complexes or the elongation stages. Necessary for the loading of replication factors onto chromatin, including gmnc, cdc45, DNA polymerases and components of the GINS complex such as ginsl/sld5. Plays a central role in DNA repair by bridging proteins and promoting recruitment of proteins to DNA damage sites. Involved in double-strand break (DSB) repair via homologous recombination in S-phase by promoting the exchange between the DNA replication factor A (RPA) complex and RAD51. Involved in microhomology-mediated end-joining (MMEJ) DNA repair by promoting recruitment of polymerase theta (POLQ) to DNA damage sites during mitosis. In response to DNA damage, triggers the recruitment of checkpoint signaling proteins on chromatin, which activate the chek1 signaling pathway and block S-phase progression. Increases the kinase activity of atr to numerous substrates, and is required for the phosphorylation of Rad1. Together with cip2a, plays an essential role in the response to genome instability generated by the presence of acentric chromosome fragments derived from shattered chromosomes within micronuclei. The CIP2A-TOPBP1 complex tethers chromosome fragments during mitosis to ensure clustered segregation of the fragments to a single daughter cell nucleus, facilitating re-ligation with limited chromosome scattering and loss. The polypeptide is DNA topoisomerase 2-binding protein 1-A (topbp1-A) (Xenopus laevis (African clawed frog)).